Reading from the N-terminus, the 359-residue chain is Small ribosomal subunit protein uS2 (359 aa).

Residues 232-295 (EPQFKPSEFT…PVGTEPVATT (64 aa)) form a disordered region. Basic and acidic residues-rich tracts occupy residues 239-250 (EFTRRDGDENRN) and 257-273 (DNRR…DTHY).

It belongs to the universal ribosomal protein uS2 family.

In Spiroplasma citri, this protein is Small ribosomal subunit protein uS2 (rpsB).